The primary structure comprises 1843 residues: Proteasome activator complex subunit 4 (1843 aa).

The segment covering 1–11 has biased composition (low complexity); the sequence is MEPAERAGVGE. Positions 1–25 are disordered; it reads MEPAERAGVGEPPEPGGRPEPGPRG. Residues 12-22 are compositionally biased toward pro residues; sequence PPEPGGRPEPG. 2 HEAT repeats span residues 475–519 and 998–1037; these read PEGP…LVDC and NFCC…NHSG. Ser-1121 is subject to Phosphoserine. HEAT repeat units lie at residues 1179–1217 and 1354–1392; these read RVLP…QLKR and DAFL…GSKH. Phosphoserine is present on Ser-1614. HEAT repeat units lie at residues 1636-1674 and 1680-1718; these read PHQV…YNLF and EDAV…CNFL. The interval 1650 to 1738 is bromodomain-like (BRDL); that stretch reads ARSSSWHARY…EQLCKTKLPK (89 aa). Ser-1746 is subject to Phosphoserine.

This sequence belongs to the BLM10 family. Homodimer. Interacts with the 20S and 26S proteasomes. Component of the spermatoproteasome, a form of the proteasome specifically found in testis.

The protein resides in the cytoplasm. Its subcellular location is the cytosol. It is found in the nucleus. The protein localises to the nucleus speckle. In terms of biological role, associated component of the proteasome that specifically recognizes acetylated histones and promotes ATP- and ubiquitin-independent degradation of core histones during spermatogenesis and DNA damage response. Recognizes and binds acetylated histones via its bromodomain-like (BRDL) region and activates the proteasome by opening the gated channel for substrate entry. Binds to the core proteasome via its C-terminus, which occupies the same binding sites as the proteasomal ATPases, opening the closed structure of the proteasome via an active gating mechanism. Component of the spermatoproteasome, a form of the proteasome specifically found in testis: binds to acetylated histones and promotes degradation of histones, thereby participating actively to the exchange of histones during spermatogenesis. Also involved in DNA damage response in somatic cells, by promoting degradation of histones following DNA double-strand breaks. The sequence is that of Proteasome activator complex subunit 4 from Homo sapiens (Human).